The primary structure comprises 102 residues: Small ribosomal subunit protein uS10 (102 aa).

Belongs to the universal ribosomal protein uS10 family. Part of the 30S ribosomal subunit.

Functionally, involved in the binding of tRNA to the ribosomes. The chain is Small ribosomal subunit protein uS10 from Streptococcus equi subsp. zooepidemicus (strain MGCS10565).